The sequence spans 558 residues: MAAVEANGTFQANTKTTEPVRPLANFPPSVWGDRFLSFSLDTTELEGYAKAMEEPKEEVRKLIVDPTMDSNKKLSLIYSVHRLGLTYLFLQEIEAQLDKLFKEFNLQDYDEFDLYTTSINFQVFRHLGHKLPCDVFNKFKDSSSGTFKESITNDVKGMLGLYESAQLRLRGEPILDEASAFTETQLKSVVNTLEGNLAKQVMQSLRRPFHQGMPMVEARMYFSNYDEECSTHESLPKLAKLHFNYLQLQQKEELRIVSKWWKDMRFQETTPYIRDRVPEIYLWILGLYFEPRYSLARIIATKITLFLVVLDDTYDAYATIEEIRLLTDAINRWDISAMEQIPEYIRPFYKILLDEYAELEKQLAKEGRAKSVIASKEAFQDIARGYLEEAEWTNSGYVASFPEYMKNGLITSAYNVISKSALVGMGEMVGEDALAWYESHPKTLQASELISRLQDDVMTYQFERERGQSATGVDSYIKTYGVTEKEAIDELNKMIENAWKDINEGCLKPREVSMDLLAPILNLARMIDVVYRYDDGFTFPGKTMKEYITLLFVGSSPM.

Positions 311, 315, 455, 459, and 463 each coordinate Mg(2+). The DDXXD motif motif lies at 311 to 315 (DDTYD).

The protein belongs to the terpene synthase family. Requires Mg(2+) as cofactor. As to expression, expressed in roots and in green and etiolated seedlings.

It carries out the reaction (2E,6E)-farnesyl diphosphate = (+)-(R)-germacrene A + diphosphate. It functions in the pathway secondary metabolite biosynthesis; terpenoid biosynthesis. In terms of biological role, involved in sesquiterpene lactone biosynthesis. Produces exclusively (+)-germacrene A. This chain is Germacrene A synthase short form, found in Cichorium intybus (Chicory).